Reading from the N-terminus, the 341-residue chain is S-adenosylmethionine:tRNA ribosyltransferase-isomerase (341 aa).

This sequence belongs to the QueA family. As to quaternary structure, monomer.

Its subcellular location is the cytoplasm. It carries out the reaction 7-aminomethyl-7-carbaguanosine(34) in tRNA + S-adenosyl-L-methionine = epoxyqueuosine(34) in tRNA + adenine + L-methionine + 2 H(+). It participates in tRNA modification; tRNA-queuosine biosynthesis. Functionally, transfers and isomerizes the ribose moiety from AdoMet to the 7-aminomethyl group of 7-deazaguanine (preQ1-tRNA) to give epoxyqueuosine (oQ-tRNA). The polypeptide is S-adenosylmethionine:tRNA ribosyltransferase-isomerase (Clostridium botulinum (strain Langeland / NCTC 10281 / Type F)).